The primary structure comprises 412 residues: STAGA complex 65 subunit gamma (412 aa).

Residues 81-107 (AQTQSQQQTEGVKAEESEPLPSCPGSP) form a disordered region. Serine 106 carries the phosphoserine modification. A Glycyl lysine isopeptide (Lys-Gly) (interchain with G-Cter in SUMO2) cross-link involves residue lysine 269. Phosphoserine is present on residues serine 321 and serine 332. Residues 364 to 412 (EEPMSGMSEAGLPQSPDDSDSSYGSHSTDSLMGSSPVFNQRCRKRMRKI) form a disordered region. Positions 384-393 (SSYGSHSTDS) are enriched in low complexity.

Component of the STAGA transcription coactivator-HAT complex, at least composed of SUPT3H, SUPT7L, GCN5L2, TAF5L, TAF6L, TADA3L, TAD1L, TAF10, TAF12 and TAF9. Sumoylated.

The protein resides in the nucleus. The chain is STAGA complex 65 subunit gamma (Supt7l) from Mus musculus (Mouse).